The primary structure comprises 77 residues: Conotoxin CaHr91 (77 aa).

An N-terminal signal peptide occupies residues 1–19 (MKLTCALIITVLFLSITAD). Positions 20–43 (DSRGKQGYRALKSIAGMLNSKTVR) are excised as a propeptide. Intrachain disulfides connect cysteine 45-cysteine 60, cysteine 52-cysteine 65, and cysteine 59-cysteine 74.

Belongs to the conotoxin O1 superfamily. In terms of tissue distribution, expressed by the venom duct.

It localises to the secreted. In Conus capitaneus (Captain cone), this protein is Conotoxin CaHr91.